The sequence spans 337 residues: Anthraniloyl-CoA anthraniloyltransferase (337 aa).

Anthraniloyl-CoA is bound by residues threonine 29 and phenylalanine 33. Catalysis depends on cysteine 113, which acts as the Acyl-thioester intermediate. Residues 154-155 (RN), 221-224 (MRGR), and histidine 258 contribute to the anthraniloyl-CoA site.

This sequence belongs to the thiolase-like superfamily. FabH family. Homodimer.

The protein resides in the cytoplasm. It carries out the reaction anthraniloyl-CoA + malonyl-CoA + H(+) = (2-aminobenzoyl)acetyl-CoA + CO2 + CoA. Functionally, required for the biosynthesis of a number of signaling molecules, such as the quinolone signal 2-heptyl-3-hydroxy-4(1H)-quinolone (PQS), 2-heptyl-4-hydroxyquinoline (HHQ) and 2,4-dihydroxyquinoline (DHQ). These molecules are required for normal biofilm formation. Catalyzes the transfer of the anthraniloyl moiety from anthraniloyl-CoA to malonyl-CoA to form 2-aminobenzoylacetyl-CoA. The first step of the reaction is the formation of a covalent anthraniloyl-PqsD intermediate. Next, the short-lived intermediate 3-(2-aminophenyl)-3-oxopropanoyl-CoA is formed. An intramolecular rearrangement of this intermediate can give rise to 2,4-dihydroxyquinoline (DHQ). The protein is Anthraniloyl-CoA anthraniloyltransferase (pqsD) of Pseudomonas aeruginosa (strain ATCC 15692 / DSM 22644 / CIP 104116 / JCM 14847 / LMG 12228 / 1C / PRS 101 / PAO1).